Here is a 196-residue protein sequence, read N- to C-terminus: Holliday junction branch migration complex subunit RuvA (196 aa).

The interval 1–63 (MINKIYGKIV…DDDVKLFGFL (63 aa)) is domain I. Residues 64–142 (NISEREVFEN…KGDESSSYML (79 aa)) form a domain II region. K143 is a region of interest (flexible linker). A domain III region spans residues 143 to 196 (KFKELEQSIVNMGFDRKLVVVAFREIMLSDKFLILKEAEQEQFLFTETLKRLSV).

This sequence belongs to the RuvA family. Homotetramer. Forms an RuvA(8)-RuvB(12)-Holliday junction (HJ) complex. HJ DNA is sandwiched between 2 RuvA tetramers; dsDNA enters through RuvA and exits via RuvB. An RuvB hexamer assembles on each DNA strand where it exits the tetramer. Each RuvB hexamer is contacted by two RuvA subunits (via domain III) on 2 adjacent RuvB subunits; this complex drives branch migration. In the full resolvosome a probable DNA-RuvA(4)-RuvB(12)-RuvC(2) complex forms which resolves the HJ.

Its subcellular location is the cytoplasm. In terms of biological role, the RuvA-RuvB-RuvC complex processes Holliday junction (HJ) DNA during genetic recombination and DNA repair, while the RuvA-RuvB complex plays an important role in the rescue of blocked DNA replication forks via replication fork reversal (RFR). RuvA specifically binds to HJ cruciform DNA, conferring on it an open structure. The RuvB hexamer acts as an ATP-dependent pump, pulling dsDNA into and through the RuvAB complex. HJ branch migration allows RuvC to scan DNA until it finds its consensus sequence, where it cleaves and resolves the cruciform DNA. The protein is Holliday junction branch migration complex subunit RuvA of Borrelia recurrentis (strain A1).